Here is a 68-residue protein sequence, read N- to C-terminus: Galectin-10 (68 aa).

Residues 1–68 enclose the Galectin domain; it reads EPYLQVDFHT…LSISVLPDKY (68 aa).

As to quaternary structure, interacts with CEL.

It localises to the cytoplasm. The protein localises to the cytosol. The protein resides in the cytoplasmic granule. Its function is as follows. Regulates immune responses through the recognition of cell-surface glycans. Essential for the anergy and suppressive function of CD25-positive regulatory T-cells (Treg). This chain is Galectin-10 (CLC), found in Pongo pygmaeus (Bornean orangutan).